The chain runs to 715 residues: Protein naked cuticle homolog (715 aa).

The 36-residue stretch at K18 to S53 folds into the EF-hand domain. The segment at S256–P282 is disordered. Residues R257–S273 show a composition bias toward basic residues. The segment at E305–N334 is required for nuclear localization and inhibition of Wnt signaling. Residues E639–T690 form a disordered region. Low complexity-rich tracts occupy residues Q642–P664 and G673–T690.

The protein belongs to the NKD family.

The protein localises to the cell membrane. It is found in the cytoplasm. The protein resides in the nucleus. Cell autonomous antagonist of the canonical Wnt signaling pathway. May activate a second Wnt signaling pathway that controls planar cell polarity. Required for neuroblast specification. This is Protein naked cuticle homolog from Aedes aegypti (Yellowfever mosquito).